Reading from the N-terminus, the 440-residue chain is MVLLYTPPQKINKLQREMEVEILDLDYQGLGVAKIQGKTWFVENALPGEKVRIKIKEEKRQFGLATTKKILEASAQRQTPKCQYASRCGGCQNQHIPVEMQREAKQKALFRRLLKLQPEGIEFMPMIVGEAFGYRRRVRLSMLFDGKLKRLEIGFRQKNSAQIVHIEQCEVIEPALNKILSKLTALLSRFSQPKNLGHIELVAADNGVAMLLRYSGKLTENDRTLLLDFAVREELMLFLQDDEKTEQIYGQPPFYQLADNLQLQFDIRDFIQVNSLLNQRMITAALDWLDVQKQDHVLDLFCGMGNFTLPLSRRVKSAVGIEGISAMVEKAKANAERNQCQNVQFYRADLDQNFADEVWATEPFNKILLDPPRTGAAFALNALCRLKAEKILYVSCNPATLVRDAEILLNSDYRVKKVAMIDMFPHTGHLESITLFEKQS.

A TRAM domain is found at 8–69 (PQKINKLQRE…RQFGLATTKK (62 aa)). Residues C82, C88, C91, and C169 each coordinate [4Fe-4S] cluster. S-adenosyl-L-methionine contacts are provided by Q272, F301, N306, E322, D349, and D370. C396 serves as the catalytic Nucleophile.

The protein belongs to the class I-like SAM-binding methyltransferase superfamily. RNA M5U methyltransferase family. RlmD subfamily.

It catalyses the reaction uridine(1939) in 23S rRNA + S-adenosyl-L-methionine = 5-methyluridine(1939) in 23S rRNA + S-adenosyl-L-homocysteine + H(+). Its function is as follows. Catalyzes the formation of 5-methyl-uridine at position 1939 (m5U1939) in 23S rRNA. This Mannheimia succiniciproducens (strain KCTC 0769BP / MBEL55E) protein is 23S rRNA (uracil(1939)-C(5))-methyltransferase RlmD.